Reading from the N-terminus, the 108-residue chain is UPF0145 protein LGAS_1099 (108 aa).

The protein belongs to the UPF0145 family.

In Lactobacillus gasseri (strain ATCC 33323 / DSM 20243 / BCRC 14619 / CIP 102991 / JCM 1131 / KCTC 3163 / NCIMB 11718 / NCTC 13722 / AM63), this protein is UPF0145 protein LGAS_1099.